A 149-amino-acid chain; its full sequence is Large ribosomal subunit protein uL16c (149 aa).

Belongs to the universal ribosomal protein uL16 family. Part of the 50S ribosomal subunit.

The protein localises to the plastid. The protein resides in the organellar chromatophore. The protein is Large ribosomal subunit protein uL16c (rpl16) of Paulinella chromatophora.